Here is a 205-residue protein sequence, read N- to C-terminus: Gap junction epsilon-1 protein (205 aa).

The Cytoplasmic portion of the chain corresponds to 1–23; the sequence is MSLNYIKNFYEGCVKPPTVIGQF. Residues 24–44 traverse the membrane as a helical segment; sequence HTLFFGSIRIFFLGVLGFAVY. The Extracellular portion of the chain corresponds to 45 to 76; it reads GNEALHFICDPDKREVNLFCYNQFRPITPQVS. 2 disulfide bridges follow: C53–C161 and C64–C148. A helical transmembrane segment spans residues 77–97; the sequence is FSALQLVIVLVPGALFHLYAA. Over 98-112 the chain is Cytoplasmic; sequence CKSINQECILQKPIY. The chain crosses the membrane as a helical span at residues 113–133; it reads TIIYILSVLLRISLAAIAFWL. Residues 134–170 lie on the Extracellular side of the membrane; that stretch reads QIYLFGFQVKSLYLCDARSLGENMIIRCMVPEHFEKT. The chain crosses the membrane as a helical span at residues 171–191; sequence IFLIAINTFTTITILLFVAEI. The Cytoplasmic segment spans residues 192 to 205; sequence FEIIFRRLYFPFRQ.

The protein belongs to the connexin family. Beta-type (group I) subfamily. As to quaternary structure, a connexon is composed of a hexamer of connexins. In terms of tissue distribution, not detected in lens or retina.

It localises to the cell membrane. Functionally, mediates calcium-independent ATP release, suggesting activity as a hemichannel. Does not form functional gap junctions. This chain is Gap junction epsilon-1 protein (GJE1), found in Homo sapiens (Human).